Reading from the N-terminus, the 284-residue chain is Ribosomal RNA small subunit methyltransferase A (284 aa).

6 residues coordinate S-adenosyl-L-methionine: Asn-22, Leu-24, Gly-49, Glu-70, Asp-97, and Asn-117.

The protein belongs to the class I-like SAM-binding methyltransferase superfamily. rRNA adenine N(6)-methyltransferase family. RsmA subfamily.

The protein localises to the cytoplasm. The catalysed reaction is adenosine(1518)/adenosine(1519) in 16S rRNA + 4 S-adenosyl-L-methionine = N(6)-dimethyladenosine(1518)/N(6)-dimethyladenosine(1519) in 16S rRNA + 4 S-adenosyl-L-homocysteine + 4 H(+). In terms of biological role, specifically dimethylates two adjacent adenosines (A1518 and A1519) in the loop of a conserved hairpin near the 3'-end of 16S rRNA in the 30S particle. May play a critical role in biogenesis of 30S subunits. The polypeptide is Ribosomal RNA small subunit methyltransferase A (Desulforapulum autotrophicum (strain ATCC 43914 / DSM 3382 / VKM B-1955 / HRM2) (Desulfobacterium autotrophicum)).